A 273-amino-acid polypeptide reads, in one-letter code: 4-hydroxy-tetrahydrodipicolinate reductase (273 aa).

12-17 (GAMGRM) provides a ligand contact to NAD(+). K39 contacts NADP(+). Residues 102-104 (GTT) and 126-129 (ASNF) contribute to the NAD(+) site. H159 serves as the catalytic Proton donor/acceptor. H160 is a (S)-2,3,4,5-tetrahydrodipicolinate binding site. K163 functions as the Proton donor in the catalytic mechanism. 169-170 (GT) contributes to the (S)-2,3,4,5-tetrahydrodipicolinate binding site.

Belongs to the DapB family. As to quaternary structure, homotetramer.

It is found in the cytoplasm. The catalysed reaction is (S)-2,3,4,5-tetrahydrodipicolinate + NAD(+) + H2O = (2S,4S)-4-hydroxy-2,3,4,5-tetrahydrodipicolinate + NADH + H(+). It carries out the reaction (S)-2,3,4,5-tetrahydrodipicolinate + NADP(+) + H2O = (2S,4S)-4-hydroxy-2,3,4,5-tetrahydrodipicolinate + NADPH + H(+). The protein operates within amino-acid biosynthesis; L-lysine biosynthesis via DAP pathway; (S)-tetrahydrodipicolinate from L-aspartate: step 4/4. In terms of biological role, catalyzes the conversion of 4-hydroxy-tetrahydrodipicolinate (HTPA) to tetrahydrodipicolinate. The protein is 4-hydroxy-tetrahydrodipicolinate reductase of Buchnera aphidicola subsp. Schizaphis graminum (strain Sg).